The chain runs to 279 residues: Tryptophan synthase alpha chain (279 aa).

Active-site proton acceptor residues include E49 and D60.

This sequence belongs to the TrpA family. In terms of assembly, tetramer of two alpha and two beta chains.

The enzyme catalyses (1S,2R)-1-C-(indol-3-yl)glycerol 3-phosphate + L-serine = D-glyceraldehyde 3-phosphate + L-tryptophan + H2O. Its pathway is amino-acid biosynthesis; L-tryptophan biosynthesis; L-tryptophan from chorismate: step 5/5. The alpha subunit is responsible for the aldol cleavage of indoleglycerol phosphate to indole and glyceraldehyde 3-phosphate. The chain is Tryptophan synthase alpha chain from Nitrosospira multiformis (strain ATCC 25196 / NCIMB 11849 / C 71).